The primary structure comprises 82 residues: Immediate early response 3-interacting protein 1 (82 aa).

Helical transmembrane passes span Ala-2–Leu-22 and Val-62–Gly-82.

This sequence belongs to the YOS1 family.

The protein resides in the endoplasmic reticulum membrane. Functionally, regulator of endoplasmic reticulum secretion that acts as a key determinant of brain size. Required for secretion of extracellular matrix proteins. Required for correct brain development by depositing sufficient extracellular matrix proteins for tissue integrity and the proliferation of neural progenitors. Acts as a regulator of the unfolded protein response (UPR). The polypeptide is Immediate early response 3-interacting protein 1 (Rattus norvegicus (Rat)).